The primary structure comprises 323 residues: MILFKVMHLEFEKELLEIKEKIDRLLGLYRLGKEEVLSELDELRKKFKEKARKIYRDLSPWERVQVARHPKRPHTSDYIKYLIKDFEEVHGDTCYGDDKAVIAGFGYFRGKPVAVVGHEKGKDTKEKLERNFGMPHPEGYRKAIKVFKLAERYNIPVITFIDTPGAFPGIGAEERGQSRAIAESMLTMAFLKVPSVAVVIGEGGSGGALAFGVANRVCILENAYYSVISPEGCAAILWKDQSKVKEAAKALRLTAKDLKELGVVDCVIPEPYGAAHWSPRGTAMMVGMTLKKCLDELSKLTEEGVVRSRLEKFKNMGAFKIAS.

The region spanning 35 to 296 is the CoA carboxyltransferase C-terminal domain; it reads EVLSELDELR…GMTLKKCLDE (262 aa).

Belongs to the AccA family. Acetyl-CoA carboxylase is a heterohexamer composed of biotin carboxyl carrier protein (AccB), biotin carboxylase (AccC) and two subunits each of ACCase subunit alpha (AccA) and ACCase subunit beta (AccD).

The protein resides in the cytoplasm. It carries out the reaction N(6)-carboxybiotinyl-L-lysyl-[protein] + acetyl-CoA = N(6)-biotinyl-L-lysyl-[protein] + malonyl-CoA. The protein operates within lipid metabolism; malonyl-CoA biosynthesis; malonyl-CoA from acetyl-CoA: step 1/1. In terms of biological role, component of the acetyl coenzyme A carboxylase (ACC) complex. First, biotin carboxylase catalyzes the carboxylation of biotin on its carrier protein (BCCP) and then the CO(2) group is transferred by the carboxyltransferase to acetyl-CoA to form malonyl-CoA. This Aquifex aeolicus (strain VF5) protein is Acetyl-coenzyme A carboxylase carboxyl transferase subunit alpha.